A 185-amino-acid polypeptide reads, in one-letter code: MSRLSIHPEGSTNATSPAEPLLESDDPAVIKVELAKRGIAFQRWPAKVKLDQNSSESDILAAYAVEIARVQADGRYPTVDAIRITPDHPDREALRQKFLDEHTHAEDEVRFFVEGCGLFCLHIGAEVLQVLCEQNDCINVPAGTRHWFDMGSKPQFCAVRFFDNPEGWIANFTGDAIAERFAKLP.

Positions 1–22 (MSRLSIHPEGSTNATSPAEPLL) are disordered. Fe(2+) contacts are provided by His102, His104, Glu108, and His146. Ni(2+) contacts are provided by His102, His104, Glu108, and His146.

It belongs to the acireductone dioxygenase (ARD) family. In terms of assembly, monomer. Fe(2+) serves as cofactor. Requires Ni(2+) as cofactor.

It carries out the reaction 1,2-dihydroxy-5-(methylsulfanyl)pent-1-en-3-one + O2 = 3-(methylsulfanyl)propanoate + CO + formate + 2 H(+). It catalyses the reaction 1,2-dihydroxy-5-(methylsulfanyl)pent-1-en-3-one + O2 = 4-methylsulfanyl-2-oxobutanoate + formate + 2 H(+). Its pathway is amino-acid biosynthesis; L-methionine biosynthesis via salvage pathway; L-methionine from S-methyl-5-thio-alpha-D-ribose 1-phosphate: step 5/6. Catalyzes 2 different reactions between oxygen and the acireductone 1,2-dihydroxy-3-keto-5-methylthiopentene (DHK-MTPene) depending upon the metal bound in the active site. Fe-containing acireductone dioxygenase (Fe-ARD) produces formate and 2-keto-4-methylthiobutyrate (KMTB), the alpha-ketoacid precursor of methionine in the methionine recycle pathway. Ni-containing acireductone dioxygenase (Ni-ARD) produces methylthiopropionate, carbon monoxide and formate, and does not lie on the methionine recycle pathway. The sequence is that of Acireductone dioxygenase from Prochlorococcus marinus (strain MIT 9313).